The chain runs to 81 residues: Photosystem I iron-sulfur center (81 aa).

4Fe-4S ferredoxin-type domains are found at residues 2–31 (SHSV…MVPW) and 37–68 (GQIA…VRVY). [4Fe-4S] cluster contacts are provided by C11, C14, C17, C21, C48, C51, C54, and C58.

As to quaternary structure, the cyanobacterial PSI reaction center is composed of one copy each of PsaA,B,C,D,E,F,I,J,K,L,M and X, and forms trimeric complexes. The cofactor is [4Fe-4S] cluster.

It localises to the cellular thylakoid membrane. The enzyme catalyses reduced [plastocyanin] + hnu + oxidized [2Fe-2S]-[ferredoxin] = oxidized [plastocyanin] + reduced [2Fe-2S]-[ferredoxin]. Its function is as follows. Apoprotein for the two 4Fe-4S centers FA and FB of photosystem I (PSI); essential for photochemical activity. FB is the terminal electron acceptor of PSI, donating electrons to ferredoxin. The C-terminus interacts with PsaA/B/D and helps assemble the protein into the PSI complex. Required for binding of PsaD and PsaE to PSI. PSI is a plastocyanin/cytochrome c6-ferredoxin oxidoreductase, converting photonic excitation into a charge separation, which transfers an electron from the donor P700 chlorophyll pair to the spectroscopically characterized acceptors A0, A1, FX, FA and FB in turn. This is Photosystem I iron-sulfur center from Trichodesmium erythraeum (strain IMS101).